A 1775-amino-acid chain; its full sequence is Atrochrysone carboxylic acid synthase (1775 aa).

The interval 29-258 is N-terminal acylcarrier protein transacylase domain (SAT); the sequence is RSQSKTESGW…QLPVYGGLCH (230 aa). The 431-residue stretch at 391 to 821 folds into the Ketosynthase family 3 (KS3) domain; sequence DSSIAIVGMA…GGNTSLLIEE (431 aa). Active-site for beta-ketoacyl synthase activity residues include C564, H699, and H740. The segment at 921–1241 is malonyl-CoA:ACP transacylase (MAT) domain; that stretch reads FVFSGQGSFY…MAQLHNLGVD (321 aa). Residues 1305–1626 form a product template (PT) domain region; sequence TSLVHRLVCE…RSLINTFFSP (322 aa). The segment at 1309 to 1455 is N-terminal hotdog fold; it reads HRLVCESVQE…WLEEWSPMTH (147 aa). The region spanning 1309 to 1621 is the PKS/mFAS DH domain; sequence HRLVCESVQE…FRTFPRSLIN (313 aa). Catalysis depends on H1341, which acts as the Proton acceptor; for dehydratase activity. The C-terminal hotdog fold stretch occupies residues 1472-1621; sequence TANRLSRDMV…FRTFPRSLIN (150 aa). D1532 serves as the catalytic Proton donor; for dehydratase activity. Positions 1672–1694 are disordered; it reads SRTVMDSSDSSPATTLTPPTLPS. Positions 1677 to 1689 are enriched in low complexity; the sequence is DSSDSSPATTLTP. The Carrier domain occupies 1698-1775; that stretch reads STESPIVHRA…DLKAWLIDYC (78 aa). O-(pantetheine 4'-phosphoryl)serine is present on S1735.

In terms of tissue distribution, endocrocin is specifically produced in conidia.

The catalysed reaction is holo-[ACP] + 8 malonyl-CoA + 8 H(+) = atrochrysone carboxyl-[ACP] + 8 CO2 + 8 CoA + 2 H2O. The protein operates within secondary metabolite biosynthesis. In terms of biological role, non-reducing polyketide synthase; part of the gene cluster that mediates the biosynthesis of endocrocin, a simple anthraquinone interesting for many biotechnological applications. The pathway begins with the synthesis of atrochrysone thioester by the polyketide synthase (PKS) encA. The atrochrysone carboxyl ACP thioesterase encB then breaks the thioester bond and releases the atrochrysone carboxylic acid from encA. The atrochrysone carboxylic acid is then converted to endocrocin anthrone which is further oxidized into endocrocin by the anthrone oxygenase encC. The exact function of encD has not been identified yet, but it negatively regulates endocrocin production, likely through the modification of endocrocin itself. The protein is Atrochrysone carboxylic acid synthase of Aspergillus fumigatus (strain ATCC MYA-4609 / CBS 101355 / FGSC A1100 / Af293) (Neosartorya fumigata).